The following is a 267-amino-acid chain: tRNA pseudouridine synthase A (267 aa).

Residue aspartate 52 is the Nucleophile of the active site. Tyrosine 110 serves as a coordination point for substrate.

The protein belongs to the tRNA pseudouridine synthase TruA family. As to quaternary structure, homodimer.

It catalyses the reaction uridine(38/39/40) in tRNA = pseudouridine(38/39/40) in tRNA. Functionally, formation of pseudouridine at positions 38, 39 and 40 in the anticodon stem and loop of transfer RNAs. This chain is tRNA pseudouridine synthase A, found in Paraburkholderia phymatum (strain DSM 17167 / CIP 108236 / LMG 21445 / STM815) (Burkholderia phymatum).